Here is a 481-residue protein sequence, read N- to C-terminus: Glutamate--tRNA ligase (481 aa).

Positions Pro10 to Asn20 match the 'HIGH' region motif. The 'KMSKS' region motif lies at Lys251–Arg255. Lys254 is a binding site for ATP.

This sequence belongs to the class-I aminoacyl-tRNA synthetase family. Glutamate--tRNA ligase type 1 subfamily. Monomer.

It localises to the cytoplasm. It catalyses the reaction tRNA(Glu) + L-glutamate + ATP = L-glutamyl-tRNA(Glu) + AMP + diphosphate. Catalyzes the attachment of glutamate to tRNA(Glu) in a two-step reaction: glutamate is first activated by ATP to form Glu-AMP and then transferred to the acceptor end of tRNA(Glu). The protein is Glutamate--tRNA ligase of Exiguobacterium sibiricum (strain DSM 17290 / CCUG 55495 / CIP 109462 / JCM 13490 / 255-15).